Consider the following 320-residue polypeptide: Biotin synthase 2 (320 aa).

The Radical SAM core domain maps to 34–261; sequence NVVQCSKLLS…ASYVRLSAGR (228 aa). Residues C49, C53, and C56 each coordinate [4Fe-4S] cluster. 4 residues coordinate [2Fe-2S] cluster: C93, C124, C184, and R256.

It belongs to the radical SAM superfamily. Biotin synthase family. Homodimer. [4Fe-4S] cluster is required as a cofactor. It depends on [2Fe-2S] cluster as a cofactor.

It carries out the reaction (4R,5S)-dethiobiotin + (sulfur carrier)-SH + 2 reduced [2Fe-2S]-[ferredoxin] + 2 S-adenosyl-L-methionine = (sulfur carrier)-H + biotin + 2 5'-deoxyadenosine + 2 L-methionine + 2 oxidized [2Fe-2S]-[ferredoxin]. It functions in the pathway cofactor biosynthesis; biotin biosynthesis; biotin from 7,8-diaminononanoate: step 2/2. Its function is as follows. Catalyzes the conversion of dethiobiotin (DTB) to biotin by the insertion of a sulfur atom into dethiobiotin via a radical-based mechanism. This is Biotin synthase 2 from Paracoccus denitrificans (strain Pd 1222).